The chain runs to 304 residues: MRLPIFLDTDPGIDDAVAIAAAIFAPELDLQLMTTVAGNVSVEKTTRNALQLLHFWNAEIPLAQGAAVPLVRAPRDAASVHGESGMAGYDFVEHNRKPLGIPAFLAIRDALMRAPEPVTLVAIGPLTNIALLLSQCPECKPYIRRLVIMGGSAGRGNCTPNAEFNIAADPEAAACVFRSGIEIVMCGLDVTNQAILTPDYLSTLPQLNRTGKMLHALFSHYRSGSMQSGLRMHDLCAIAWLVRPDLFTLKPCFVAVETQGEFTSGTTVVDIDGCLGKPANVQVALDLNVKGFQQWVAEVLALVP.

The active site involves H233.

Belongs to the IUNH family. RihC subfamily.

Its function is as follows. Hydrolyzes both purine and pyrimidine ribonucleosides with a broad-substrate specificity. The polypeptide is Non-specific ribonucleoside hydrolase RihC (Escherichia coli O157:H7).